The primary structure comprises 309 residues: Protein FdhE homolog (309 aa).

The protein belongs to the FdhE family.

The protein resides in the cytoplasm. Necessary for formate dehydrogenase activity. This is Protein FdhE homolog from Yersinia pestis bv. Antiqua (strain Antiqua).